A 1373-amino-acid polypeptide reads, in one-letter code: DNA-directed RNA polymerase subunit beta (1373 aa).

The protein belongs to the RNA polymerase beta chain family. As to quaternary structure, the RNAP catalytic core consists of 2 alpha, 1 beta, 1 beta' and 1 omega subunit. When a sigma factor is associated with the core the holoenzyme is formed, which can initiate transcription.

The catalysed reaction is RNA(n) + a ribonucleoside 5'-triphosphate = RNA(n+1) + diphosphate. Functionally, DNA-dependent RNA polymerase catalyzes the transcription of DNA into RNA using the four ribonucleoside triphosphates as substrates. In Rickettsia massiliae (strain Mtu5), this protein is DNA-directed RNA polymerase subunit beta.